Here is a 241-residue protein sequence, read N- to C-terminus: Probable transcriptional regulatory protein LMOf2365_1554 (241 aa).

Over residues 1 to 14 (MSGHSKWNNIQGRK) the composition is skewed to polar residues. The tract at residues 1 to 22 (MSGHSKWNNIQGRKNAQDSKRS) is disordered.

It belongs to the TACO1 family.

Its subcellular location is the cytoplasm. The chain is Probable transcriptional regulatory protein LMOf2365_1554 from Listeria monocytogenes serotype 4b (strain F2365).